The sequence spans 439 residues: Proton pump-interactor 4 (439 aa).

Residues 286–354 (KEEKEIDEET…AKKKKAVCKS (69 aa)) adopt a coiled-coil conformation. Residues 415–435 (LWVWTVSSAAVALPLALLVVF) form a helical membrane-spanning segment.

The protein belongs to the plant Proton pump-interactor protein family.

The protein localises to the cell membrane. It is found in the endoplasmic reticulum membrane. May regulate plasma membrane ATPase activity. The protein is Proton pump-interactor 4 (PPI4) of Arabidopsis thaliana (Mouse-ear cress).